A 401-amino-acid polypeptide reads, in one-letter code: Tyrosine--tRNA ligase (401 aa).

Positions 42 to 51 (PTAPDLHLGH) match the 'HIGH' region motif. The 'KMSKS' region signature appears at 226 to 230 (KMSKS). Lys-229 is an ATP binding site. Residues 336–397 (IALAQLLKQI…GKRRIAKLSI (62 aa)) form the S4 RNA-binding domain.

The protein belongs to the class-I aminoacyl-tRNA synthetase family. TyrS type 2 subfamily. As to quaternary structure, homodimer.

It localises to the cytoplasm. It carries out the reaction tRNA(Tyr) + L-tyrosine + ATP = L-tyrosyl-tRNA(Tyr) + AMP + diphosphate + H(+). Its function is as follows. Catalyzes the attachment of tyrosine to tRNA(Tyr) in a two-step reaction: tyrosine is first activated by ATP to form Tyr-AMP and then transferred to the acceptor end of tRNA(Tyr). In Legionella pneumophila (strain Lens), this protein is Tyrosine--tRNA ligase.